Consider the following 337-residue polypeptide: Cytoskeleton protein RodZ (337 aa).

Residues 1 to 111 (MNTEATHDQN…LGKRRKKRDG (111 aa)) lie on the Cytoplasmic side of the membrane. An HTH cro/C1-type domain is found at 19-71 (LRNAREQLGLSQQAVAERLCLKVSTVRDIEEDKAPADLASTFLRGYIRSYARL). The H-T-H motif DNA-binding region spans 30–49 (QQAVAERLCLKVSTVRDIEE). Residues 112-132 (WLMTFTWLVLFVVIGLSGAWW) form a helical; Signal-anchor for type II membrane protein membrane-spanning segment. The Periplasmic segment spans residues 133–337 (WQDHKAQQEE…TLNAEQSPAQ (205 aa)). Positions 145–167 (TMADQSSAELSSNSEQGQSVPLN) are enriched in polar residues. Residues 145–236 (TMADQSSAEL…TAATTPDGAA (92 aa)) are disordered. A compositionally biased stretch (low complexity) spans 168–207 (TSTTTDPATTSTPPASVDTTATNTQTPAVTAPAPAVDPQQ). The span at 208-218 (NAVVSPSQANV) shows a compositional bias: polar residues. Low complexity predominate over residues 219–236 (DTAATPAPTAATTPDGAA).

It belongs to the RodZ family.

The protein resides in the cell inner membrane. Its function is as follows. Cytoskeletal protein that is involved in cell-shape control through regulation of the length of the long axis. In Escherichia coli O9:H4 (strain HS), this protein is Cytoskeleton protein RodZ.